A 273-amino-acid chain; its full sequence is Undecaprenyl-diphosphatase (273 aa).

Transmembrane regions (helical) follow at residues Ser39 to Phe59, Leu86 to Thr106, Leu117 to Gly137, Val146 to Val166, Phe189 to Leu209, Leu220 to Leu240, and Ile249 to Thr269.

It belongs to the UppP family.

It localises to the cell inner membrane. It catalyses the reaction di-trans,octa-cis-undecaprenyl diphosphate + H2O = di-trans,octa-cis-undecaprenyl phosphate + phosphate + H(+). Catalyzes the dephosphorylation of undecaprenyl diphosphate (UPP). Confers resistance to bacitracin. In Pelobacter propionicus (strain DSM 2379 / NBRC 103807 / OttBd1), this protein is Undecaprenyl-diphosphatase.